The following is a 104-amino-acid chain: N(4)-acetylcytidine amidohydrolase (104 aa).

Residues 7 to 104 (TFFTRFEQDI…FWVIAFELVD (98 aa)) enclose the ASCH domain. The active-site Proton acceptor is Lys-21. Thr-24 serves as the catalytic Nucleophile. The active-site Proton donor is the Glu-74.

It belongs to the N(4)-acetylcytidine amidohydrolase family.

It carries out the reaction N(4)-acetylcytidine + H2O = cytidine + acetate + H(+). It catalyses the reaction N(4)-acetyl-2'-deoxycytidine + H2O = 2'-deoxycytidine + acetate + H(+). The enzyme catalyses N(4)-acetylcytosine + H2O = cytosine + acetate + H(+). Functionally, catalyzes the hydrolysis of N(4)-acetylcytidine (ac4C). The chain is N(4)-acetylcytidine amidohydrolase from Pasteurella multocida (strain Pm70).